Consider the following 293-residue polypeptide: Energy-coupling factor transporter ATP-binding protein EcfA2 (293 aa).

The ABC transporter domain maps to 3-246 (ITFQKVEHRY…ADELEKIGVD (244 aa)). 40–47 (GHTGSGKS) provides a ligand contact to ATP.

This sequence belongs to the ABC transporter superfamily. Energy-coupling factor EcfA family. In terms of assembly, forms a stable energy-coupling factor (ECF) transporter complex composed of 2 membrane-embedded substrate-binding proteins (S component), 2 ATP-binding proteins (A component) and 2 transmembrane proteins (T component).

The protein resides in the cell membrane. ATP-binding (A) component of a common energy-coupling factor (ECF) ABC-transporter complex. Unlike classic ABC transporters this ECF transporter provides the energy necessary to transport a number of different substrates. The chain is Energy-coupling factor transporter ATP-binding protein EcfA2 from Bacillus thuringiensis (strain Al Hakam).